A 63-amino-acid polypeptide reads, in one-letter code: Large ribosomal subunit protein uL29 (63 aa).

This sequence belongs to the universal ribosomal protein uL29 family.

The sequence is that of Large ribosomal subunit protein uL29 from Shewanella halifaxensis (strain HAW-EB4).